A 438-amino-acid polypeptide reads, in one-letter code: Elongation factor 1-alpha (438 aa).

A tr-type G domain is found at 5-228; sequence KPHLNLVVIG…ALDSLEPPPK (224 aa). Positions 14-21 are G1; sequence GHVDHGKS. 14–21 contributes to the GTP binding site; sequence GHVDHGKS. S21 contributes to the Mg(2+) binding site. Residues 70–74 are G2; sequence GVTIA. The G3 stretch occupies residues 91 to 94; that stretch reads DAPG. GTP is bound by residues 91-95 and 153-156; these read DAPGH and NKMD. The tract at residues 153–156 is G4; that stretch reads NKMD. Residues 194 to 196 form a G5 region; the sequence is SAW.

Belongs to the TRAFAC class translation factor GTPase superfamily. Classic translation factor GTPase family. EF-Tu/EF-1A subfamily.

The protein resides in the cytoplasm. The catalysed reaction is GTP + H2O = GDP + phosphate + H(+). Its function is as follows. GTP hydrolase that promotes the GTP-dependent binding of aminoacyl-tRNA to the A-site of ribosomes during protein biosynthesis. This chain is Elongation factor 1-alpha, found in Staphylothermus marinus (strain ATCC 43588 / DSM 3639 / JCM 9404 / F1).